The following is a 433-amino-acid chain: Glutamate-1-semialdehyde 2,1-aminomutase (433 aa).

Lysine 273 bears the N6-(pyridoxal phosphate)lysine mark.

This sequence belongs to the class-III pyridoxal-phosphate-dependent aminotransferase family. HemL subfamily. In terms of assembly, homodimer. The cofactor is pyridoxal 5'-phosphate.

It localises to the cytoplasm. It carries out the reaction (S)-4-amino-5-oxopentanoate = 5-aminolevulinate. It functions in the pathway porphyrin-containing compound metabolism; protoporphyrin-IX biosynthesis; 5-aminolevulinate from L-glutamyl-tRNA(Glu): step 2/2. It participates in porphyrin-containing compound metabolism; chlorophyll biosynthesis. The sequence is that of Glutamate-1-semialdehyde 2,1-aminomutase from Microcystis aeruginosa (strain NIES-843 / IAM M-2473).